The following is a 139-amino-acid chain: Peptide methionine sulfoxide reductase MsrB (139 aa).

Residues 8 to 130 (EREWQRELSP…NSASLQLKTD (123 aa)) enclose the MsrB domain. The Zn(2+) site is built by C47, C50, C96, and C99. C119 (nucleophile) is an active-site residue.

It belongs to the MsrB Met sulfoxide reductase family. It depends on Zn(2+) as a cofactor.

It carries out the reaction L-methionyl-[protein] + [thioredoxin]-disulfide + H2O = L-methionyl-(R)-S-oxide-[protein] + [thioredoxin]-dithiol. The sequence is that of Peptide methionine sulfoxide reductase MsrB from Acinetobacter baylyi (strain ATCC 33305 / BD413 / ADP1).